Consider the following 341-residue polypeptide: Glucokinase (341 aa).

18–23 is an ATP binding site; that stretch reads GDIGGT.

Belongs to the bacterial glucokinase family.

Its subcellular location is the cytoplasm. The enzyme catalyses D-glucose + ATP = D-glucose 6-phosphate + ADP + H(+). This Rhizobium johnstonii (strain DSM 114642 / LMG 32736 / 3841) (Rhizobium leguminosarum bv. viciae) protein is Glucokinase.